The chain runs to 484 residues: Probable glycine dehydrogenase (decarboxylating) subunit 2 (484 aa).

Position 264 is an N6-(pyridoxal phosphate)lysine (Lys-264).

It belongs to the GcvP family. C-terminal subunit subfamily. As to quaternary structure, the glycine cleavage system is composed of four proteins: P, T, L and H. In this organism, the P 'protein' is a heterodimer of two subunits. It depends on pyridoxal 5'-phosphate as a cofactor.

The enzyme catalyses N(6)-[(R)-lipoyl]-L-lysyl-[glycine-cleavage complex H protein] + glycine + H(+) = N(6)-[(R)-S(8)-aminomethyldihydrolipoyl]-L-lysyl-[glycine-cleavage complex H protein] + CO2. The glycine cleavage system catalyzes the degradation of glycine. The P protein binds the alpha-amino group of glycine through its pyridoxal phosphate cofactor; CO(2) is released and the remaining methylamine moiety is then transferred to the lipoamide cofactor of the H protein. The protein is Probable glycine dehydrogenase (decarboxylating) subunit 2 of Legionella pneumophila (strain Lens).